The sequence spans 365 residues: c-di-GMP synthase (365 aa).

This sequence belongs to the CD-NTase family. E subfamily.

The enzyme catalyses 2 GTP = 3',3'-c-di-GMP + 2 diphosphate. Cyclic nucleotide synthase (second messenger synthase) of a CBASS antivirus system. CBASS (cyclic oligonucleotide-based antiphage signaling system) provides immunity against bacteriophage. The CD-NTase protein synthesizes cyclic nucleotides in response to infection; these serve as specific second messenger signals. The signals activate a diverse range of effectors, leading to bacterial cell death and thus abortive phage infection. A type I-D(GG) CBASS system. Its function is as follows. Cyclic dinucleotide synthase that catalyzes the synthesis of c-di-GMP, has no activity with other NTP substrates. The polypeptide is c-di-GMP synthase (Flavobacteriaceae sp. genome_bin_11).